Here is a 42-residue protein sequence, read N- to C-terminus: Photosystem I reaction center subunit IX (42 aa).

The helical transmembrane segment at 7–27 (YLSTAPVLATLWFGFLAGLLI) threads the bilayer.

It belongs to the PsaJ family.

The protein resides in the plastid. Its subcellular location is the chloroplast thylakoid membrane. In terms of biological role, may help in the organization of the PsaE and PsaF subunits. The chain is Photosystem I reaction center subunit IX from Anthoceros angustus (Hornwort).